The following is a 359-amino-acid chain: Salicylate carboxymethyltransferase (359 aa).

Residue Tyr-18 coordinates S-adenosyl-L-methionine. Substrate contacts are provided by residues Tyr-18, 21–25 (NSFIQ), and Gln-25. Residues Gly-59, 59-60 (GC), 59-61 (GCS), Asn-65, 96-99 (LNDL), Asp-98, 129-131 (SFY), and 146-148 (SYS) contribute to the S-adenosyl-L-methionine site. Residues 147 to 151 (YSLMW) and Trp-151 each bind substrate. Asn-162, Asp-248, Phe-250, and Asn-251 together coordinate Mg(2+). Tyr-255 provides a ligand contact to substrate.

This sequence belongs to the methyltransferase superfamily. SABATH family.

The enzyme catalyses salicylate + S-adenosyl-L-methionine = methyl salicylate + S-adenosyl-L-homocysteine. Functionally, catalyzes the methylation of the free carboxyl end of the plant hormone salicylic acid (SA). Converts SA to SA methyl ester (MSA). The volatile compound MSA is hypothesized to act as an airborne signal that triggers defense responses in uninfected plants. MSA is an important chemoattractant for moth pollinated flowering plants. In Clarkia breweri (Fairy fans), this protein is Salicylate carboxymethyltransferase (SAMT).